The sequence spans 948 residues: Coatomer subunit beta-2 (948 aa).

HEAT repeat units follow at residues 49-87 (ETIP…TDSK), 92-126 (PEMI…MKET), 127-164 (EIVE…LPHG), 274-311 (TAIR…TLHR), 312-349 (DIMV…HHNI), and 391-428 (EVAS…TNPK).

As to quaternary structure, oligomeric complex that consists of at least the alpha, beta, beta', gamma, delta, epsilon and zeta subunits.

The protein resides in the cytoplasm. The protein localises to the golgi apparatus membrane. It localises to the cytoplasmic vesicle. It is found in the COPI-coated vesicle membrane. Functionally, the coatomer is a cytosolic protein complex that binds to dilysine motifs and reversibly associates with Golgi non-clathrin-coated vesicles, which further mediate biosynthetic protein transport from the ER, via the Golgi up to the trans Golgi network. Coatomer complex is required for budding from Golgi membranes, and is essential for the retrograde Golgi-to-ER transport of dilysine-tagged proteins. In Arabidopsis thaliana (Mouse-ear cress), this protein is Coatomer subunit beta-2.